The sequence spans 278 residues: Probable malate dehydrogenase (278 aa).

Substrate-binding residues include Arg51 and Arg57. NAD(+) is bound by residues Asn64 and 87–89 (VSN). Residues Asn89 and Arg120 each coordinate substrate. The active-site Proton acceptor is the His144.

This sequence belongs to the LDH/MDH superfamily.

It carries out the reaction (S)-malate + NAD(+) = oxaloacetate + NADH + H(+). In terms of biological role, catalyzes the reversible oxidation of malate to oxaloacetate. The protein is Probable malate dehydrogenase (mdh) of Pseudomonas putida (strain ATCC 47054 / DSM 6125 / CFBP 8728 / NCIMB 11950 / KT2440).